The chain runs to 218 residues: Chromophore lyase CpcT/CpeT 1 (218 aa).

This sequence belongs to the CpcT/CpeT biliprotein lyase family.

Its function is as follows. Covalently attaches a chromophore to Cys residue(s) of phycobiliproteins. The polypeptide is Chromophore lyase CpcT/CpeT 1 (Synechococcus sp. (strain JA-3-3Ab) (Cyanobacteria bacterium Yellowstone A-Prime)).